A 102-amino-acid polypeptide reads, in one-letter code: Auxin-responsive protein SAUR68 (102 aa).

This sequence belongs to the ARG7 family.

It localises to the cell membrane. Functionally, may promote auxin-stimulated organ elongation, such as hypocotyls, stamen filaments and petals. This chain is Auxin-responsive protein SAUR68, found in Arabidopsis thaliana (Mouse-ear cress).